A 1072-amino-acid polypeptide reads, in one-letter code: DNA-directed RNA polymerase subunit beta (1072 aa).

Belongs to the RNA polymerase beta chain family. In plastids the minimal PEP RNA polymerase catalytic core is composed of four subunits: alpha, beta, beta', and beta''. When a (nuclear-encoded) sigma factor is associated with the core the holoenzyme is formed, which can initiate transcription.

Its subcellular location is the plastid. The protein localises to the chloroplast. The enzyme catalyses RNA(n) + a ribonucleoside 5'-triphosphate = RNA(n+1) + diphosphate. DNA-dependent RNA polymerase catalyzes the transcription of DNA into RNA using the four ribonucleoside triphosphates as substrates. The protein is DNA-directed RNA polymerase subunit beta of Arabidopsis thaliana (Mouse-ear cress).